The primary structure comprises 178 residues: NADPH azoreductase (178 aa).

An NADP(+)-binding site is contributed by 106–111; sequence GGGKGG.

This sequence belongs to the azoreductase type 2 family. Monomer.

The catalysed reaction is N,N-dimethyl-1,4-phenylenediamine + aniline + 2 NADP(+) = 4-(dimethylamino)azobenzene + 2 NADPH + 2 H(+). Catalyzes the reductive cleavage of azo bond in aromatic azo compounds to the corresponding amines. Requires NADPH as an electron donor for its activity. Compounds with paired naphthalene groups coupled with the azo group are good substrates, with the following preference order: Rocceline &gt; Sumifix Black B &gt; Solar Orange. This Bacillus sp. (strain OY1-2) protein is NADPH azoreductase (azr).